A 404-amino-acid polypeptide reads, in one-letter code: Zinc transporter 10 (404 aa).

The N-terminal stretch at 1–22 is a signal peptide; the sequence is MESSSSSSYIPFIRQIAASVSA. The Extracellular segment spans residues 23–49; that stretch reads ASCDAVVGGGGDKDEECRDEAAALRLK. A helical membrane pass occupies residues 50 to 70; that stretch reads MVAVAAILIAGAAGVAIPLVG. Topologically, residues 71 to 86 are cytoplasmic; sequence RRRRGGGGGGGGGASS. The chain crosses the membrane as a helical span at residues 87–107; that stretch reads GGLFVLAKAFAAGVILATGFV. Topologically, residues 108-129 are extracellular; sequence HMLHDAEHALSNPCLPHSPWRR. Residues 130-150 traverse the membrane as a helical segment; that stretch reads FPFPGFVAMLAALATLVVDFV. The Cytoplasmic segment spans residues 151 to 248; the sequence is GTHFYERKHR…GHEEGPSARH (98 aa). The helical transmembrane segment at 249–269 threads the bilayer; it reads VVVSQILELGIVSHSVIIGLS. Topologically, residues 270–280 are extracellular; sequence LGVSQSPCTIK. The chain crosses the membrane as a helical span at residues 281–301; sequence PLVAALSFHQFFEGFALGGCI. The Cytoplasmic portion of the chain corresponds to 302–311; the sequence is SEAQLKNFSA. Residues 312-332 traverse the membrane as a helical segment; that stretch reads FLMAFFFAITTPAGITVGAAV. Residues 333-343 lie on the Extracellular side of the membrane; it reads ASFYNPNSPRA. The chain crosses the membrane as a helical span at residues 344–364; it reads LVVEGILDSMSAGILIYMALV. Over 365–383 the chain is Cytoplasmic; the sequence is DLIAADFLSRKMSCNPRLQ. The helical transmembrane segment at 384-404 threads the bilayer; that stretch reads VGSYIALFLGAMAMAALALWA.

Belongs to the ZIP transporter (TC 2.A.5) family.

The protein resides in the cell membrane. Functionally, zinc transporter that may be involved in zinc uptake from the rhizosphere. The protein is Zinc transporter 10 (ZIP10) of Oryza sativa subsp. japonica (Rice).